We begin with the raw amino-acid sequence, 162 residues long: Protein lon-8 (162 aa).

The first 23 residues, M1–A23, serve as a signal peptide directing secretion.

Its subcellular location is the secreted. Its function is as follows. Secreted protein that is involved in larval elongation, early adult growth and male tail development. The chain is Protein lon-8 from Caenorhabditis elegans.